A 107-amino-acid polypeptide reads, in one-letter code: Envelope small membrane protein (107 aa).

At 1-11 the chain is on the virion surface side; it reads MMNLVNKSLEE. Residues 12–32 traverse the membrane as a helical segment; that stretch reads NGSFLTAVYIFCAFVALYLLG. At 33–107 the chain is on the intravirion side; sequence RALHAFVQAA…NFQNDGKLHS (75 aa).

This sequence belongs to the gammacoronaviruses E protein family. In terms of assembly, homooligomer. Interacts with the M membrane protein in the budding compartment of the host cell, which is located between endoplasmic reticulum and the Golgi complex. The cytoplasmic tails of both proteins are important for this function. Interacts with Nucleoprotein.

The protein localises to the host Golgi apparatus membrane. Plays a central role in virus morphogenesis and assembly. Acts as a viroporin and self-assembles in host membranes forming pentameric protein-lipid pores that allow ion transport. Also plays a role in the induction of apoptosis. The polypeptide is Envelope small membrane protein (Gallus gallus (Chicken)).